Consider the following 550-residue polypeptide: Medium/long-chain-fatty-acid--CoA/3-oxocholest-4-en-26-oate--CoA ligase (550 aa).

Residues 178–186 (TGGTTGFPK), D419, R434, and K525 contribute to the ATP site. The tract at residues 525-550 (KPDYRWAKEQTEARPADDVHAAHVSA) is disordered.

The protein belongs to the ATP-dependent AMP-binding enzyme family.

The enzyme catalyses a medium-chain fatty acid + ATP + CoA = a medium-chain fatty acyl-CoA + AMP + diphosphate. It carries out the reaction a long-chain fatty acid + ATP + CoA = a long-chain fatty acyl-CoA + AMP + diphosphate. It catalyses the reaction (25S)-3-oxocholest-4-en-26-oate + ATP + CoA = (25S)-3-oxocholest-4-en-26-oyl-CoA + AMP + diphosphate. Its pathway is lipid metabolism; fatty acid biosynthesis. It functions in the pathway steroid metabolism; cholesterol metabolism. Functionally, catalyzes the activation of medium/long-chain fatty acids as acyl-coenzyme A (acyl-CoA), which are then transferred to the multifunctional polyketide synthase (PKS) type III for further chain extension. Also involved in the degradation of cholesterol via the degradation of the side chains of C-24 branched-chain sterols. Catalyzes the ATP-dependent CoA thioesterification of the sterol 3-oxocholest-4-en-26-oate to yield 3-oxocholest-4-en-26-oyl-CoA. This chain is Medium/long-chain-fatty-acid--CoA/3-oxocholest-4-en-26-oate--CoA ligase, found in Mycobacterium marinum (strain ATCC BAA-535 / M).